Reading from the N-terminus, the 119-residue chain is Fluoride-specific ion channel FluC 1 (119 aa).

4 helical membrane-spanning segments follow: residues 6–26 (VALVAGGGFAGALCRHGIAVV), 31–51 (FPWGTLVVNVAGAFLLGAIVY), 66–86 (VVATGFLSSFTTYSTFAGETI), and 91–111 (RLAALNVVGNYALGFVAVLVA).

Belongs to the fluoride channel Fluc/FEX (TC 1.A.43) family.

It is found in the cell membrane. The catalysed reaction is fluoride(in) = fluoride(out). In terms of biological role, fluoride-specific ion channel. Important for reducing fluoride concentration in the cell, thus reducing its toxicity. This Natronomonas pharaonis (strain ATCC 35678 / DSM 2160 / CIP 103997 / JCM 8858 / NBRC 14720 / NCIMB 2260 / Gabara) (Halobacterium pharaonis) protein is Fluoride-specific ion channel FluC 1.